Consider the following 298-residue polypeptide: Protease HtpX (298 aa).

2 helical membrane passes run 4 to 24 and 38 to 58; these read IGLFLLTNIAVLAVAMITMNL and LGNLFAFAAIIGFAGSFVSLA. Position 145 (H145) interacts with Zn(2+). E146 is a catalytic residue. Residue H149 coordinates Zn(2+). Transmembrane regions (helical) follow at residues 160 to 180 and 194 to 214; these read LLQGVVNTFVIFFAKIVAYVV and ITFIVVDIVAQILFGILASMI. Residue E223 participates in Zn(2+) binding.

Belongs to the peptidase M48B family. Zn(2+) is required as a cofactor.

It localises to the cell inner membrane. The protein is Protease HtpX of Hydrogenovibrio crunogenus (strain DSM 25203 / XCL-2) (Thiomicrospira crunogena).